Consider the following 222-residue polypeptide: Small ribosomal subunit protein uS7m (222 aa).

The transit peptide at 1–14 (MSKKLANFAQKRWI) directs the protein to the mitochondrion.

This sequence belongs to the universal ribosomal protein uS7 family. As to quaternary structure, component of the mitochondrial ribosome small subunit (28S) which comprises a 12S rRNA and about 30 distinct proteins.

Its subcellular location is the mitochondrion. The protein is Small ribosomal subunit protein uS7m (mrps-7) of Caenorhabditis briggsae.